The chain runs to 93 residues: UPF0298 protein LMHCC_0506 (93 aa).

It belongs to the UPF0298 family.

The protein resides in the cytoplasm. In Listeria monocytogenes serotype 4a (strain HCC23), this protein is UPF0298 protein LMHCC_0506.